Consider the following 287-residue polypeptide: Polyamine aminopropyltransferase (287 aa).

The region spanning 5 to 238 (EIWYETLHAN…GIMTFAWASN (234 aa)) is the PABS domain. Gln33 is an S-methyl-5'-thioadenosine binding site. Positions 64 and 88 each coordinate spermidine. S-methyl-5'-thioadenosine contacts are provided by residues Glu108 and 140-141 (DG). The active-site Proton acceptor is the Asp158. 158-161 (DCTD) is a spermidine binding site. Pro165 contributes to the S-methyl-5'-thioadenosine binding site.

This sequence belongs to the spermidine/spermine synthase family. Homodimer or homotetramer.

The protein localises to the cytoplasm. It carries out the reaction S-adenosyl 3-(methylsulfanyl)propylamine + putrescine = S-methyl-5'-thioadenosine + spermidine + H(+). It participates in amine and polyamine biosynthesis; spermidine biosynthesis; spermidine from putrescine: step 1/1. Catalyzes the irreversible transfer of a propylamine group from the amino donor S-adenosylmethioninamine (decarboxy-AdoMet) to putrescine (1,4-diaminobutane) to yield spermidine. The protein is Polyamine aminopropyltransferase of Pectobacterium atrosepticum (strain SCRI 1043 / ATCC BAA-672) (Erwinia carotovora subsp. atroseptica).